A 172-amino-acid chain; its full sequence is Small ribosomal subunit protein bS6 (172 aa).

The tract at residues 100–172 (LPAKRVVKTS…ENKEIEKKED (73 aa)) is disordered. Residues 107–172 (KTSEKNVKED…ENKEIEKKED (66 aa)) show a composition bias toward basic and acidic residues.

This sequence belongs to the bacterial ribosomal protein bS6 family.

Its function is as follows. Binds together with bS18 to 16S ribosomal RNA. This is Small ribosomal subunit protein bS6 from Prochlorococcus marinus (strain MIT 9211).